We begin with the raw amino-acid sequence, 184 residues long: ATP synthase subunit b, chloroplastic (184 aa).

Residues 27–49 traverse the membrane as a helical segment; sequence LATNPINLSVVFGVLIFFGKGVL.

The protein belongs to the ATPase B chain family. As to quaternary structure, F-type ATPases have 2 components, F(1) - the catalytic core - and F(0) - the membrane proton channel. F(1) has five subunits: alpha(3), beta(3), gamma(1), delta(1), epsilon(1). F(0) has four main subunits: a(1), b(1), b'(1) and c(10-14). The alpha and beta chains form an alternating ring which encloses part of the gamma chain. F(1) is attached to F(0) by a central stalk formed by the gamma and epsilon chains, while a peripheral stalk is formed by the delta, b and b' chains.

The protein resides in the plastid. It localises to the chloroplast thylakoid membrane. Functionally, f(1)F(0) ATP synthase produces ATP from ADP in the presence of a proton or sodium gradient. F-type ATPases consist of two structural domains, F(1) containing the extramembraneous catalytic core and F(0) containing the membrane proton channel, linked together by a central stalk and a peripheral stalk. During catalysis, ATP synthesis in the catalytic domain of F(1) is coupled via a rotary mechanism of the central stalk subunits to proton translocation. In terms of biological role, component of the F(0) channel, it forms part of the peripheral stalk, linking F(1) to F(0). In Olimarabidopsis pumila (Dwarf rocket), this protein is ATP synthase subunit b, chloroplastic.